The sequence spans 1921 residues: Endoribonuclease Dicer (1921 aa).

Residues 51-227 form the Helicase ATP-binding domain; it reads LLEAALDHNT…ELEEKIKKLE (177 aa). Residue 64–71 coordinates ATP; that stretch reads LNTGSGKT. The short motif at 175-178 is the DECH box element; that stretch reads DECH. The disordered stretch occupies residues 409-433; the sequence is YVSWSDSEDDDEDEEIEEKEKPETN. Over residues 414–425 the composition is skewed to acidic residues; the sequence is DSEDDDEDEEIE. Residues 433-602 enclose the Helicase C-terminal domain; the sequence is NFPSPFTNIL…SVDTSETETE (170 aa). The Dicer dsRNA-binding fold domain maps to 630-722; it reads AIGHINRYCA…MPVGKETVKY (93 aa). The interval 727-746 is disordered; the sequence is DLHDEEETSVPGRPGSTKRR. The region spanning 895–1042 is the PAZ domain; it reads KFMEDIEKSE…LVPELCAIHP (148 aa). Positions 1270 to 1289 are disordered; it reads NLSKDKVDSEKNTSSGYSSK. RNase III domains follow at residues 1277–1404 and 1665–1823; these read DSEK…EETT and FENF…MDSG. The Mg(2+) site is built by Glu1317, Asp1396, Glu1399, and Glu1704. Positions 1782–1801 are disordered; sequence QGMDSELRRSEEDEEKEEDI. Asp1809 and Glu1812 together coordinate Mg(2+). In terms of domain architecture, DRBM spans 1848-1913; the sequence is VPRSPVRELL…ARRALRSLKA (66 aa).

Belongs to the helicase family. Dicer subfamily. As to quaternary structure, component of the RISC loading complex (RLC), or micro-RNA (miRNA) loading complex (miRLC), which is composed of DICER1, AGO2 and TARBP2; DICER1 and TARBP2 are required to process precursor miRNAs (pre-miRNAs) to mature miRNAs and then load them onto AGO2. Note that the trimeric RLC/miRLC is also referred to as RISC. Mg(2+) serves as cofactor. It depends on Mn(2+) as a cofactor.

It localises to the cytoplasm. It catalyses the reaction Endonucleolytic cleavage to 5'-phosphomonoester.. In terms of biological role, double-stranded RNA (dsRNA) endoribonuclease playing a central role in short dsRNA-mediated post-transcriptional gene silencing. Cleaves naturally occurring long dsRNAs and short hairpin pre-microRNAs (miRNA) into fragments of twenty-one to twenty-three nucleotides with 3' overhang of two nucleotides, producing respectively short interfering RNAs (siRNA) and mature microRNAs. SiRNAs and miRNAs serve as guide to direct the RNA-induced silencing complex (RISC) to complementary RNAs to degrade them or prevent their translation. Gene silencing mediated by siRNAs, also called RNA interference, controls the elimination of transcripts from mobile and repetitive DNA elements of the genome but also the degradation of exogenous RNA of viral origin for instance. The miRNA pathway on the other side is a mean to specifically regulate the expression of target genes. The polypeptide is Endoribonuclease Dicer (DICER1) (Gallus gallus (Chicken)).